The following is a 233-amino-acid chain: 5'-methylthioadenosine/S-adenosylhomocysteine nucleosidase (233 aa).

The active-site Proton acceptor is Glu12. Substrate-binding positions include Gly78, Ile156, and 177–178 (ME). The Proton donor role is filled by Asp201.

This sequence belongs to the PNP/UDP phosphorylase family. MtnN subfamily.

It catalyses the reaction S-adenosyl-L-homocysteine + H2O = S-(5-deoxy-D-ribos-5-yl)-L-homocysteine + adenine. The enzyme catalyses S-methyl-5'-thioadenosine + H2O = 5-(methylsulfanyl)-D-ribose + adenine. The catalysed reaction is 5'-deoxyadenosine + H2O = 5-deoxy-D-ribose + adenine. It functions in the pathway amino-acid biosynthesis; L-methionine biosynthesis via salvage pathway; S-methyl-5-thio-alpha-D-ribose 1-phosphate from S-methyl-5'-thioadenosine (hydrolase route): step 1/2. Functionally, catalyzes the irreversible cleavage of the glycosidic bond in both 5'-methylthioadenosine (MTA) and S-adenosylhomocysteine (SAH/AdoHcy) to adenine and the corresponding thioribose, 5'-methylthioribose and S-ribosylhomocysteine, respectively. Also cleaves 5'-deoxyadenosine, a toxic by-product of radical S-adenosylmethionine (SAM) enzymes, into 5-deoxyribose and adenine. The polypeptide is 5'-methylthioadenosine/S-adenosylhomocysteine nucleosidase (Listeria welshimeri serovar 6b (strain ATCC 35897 / DSM 20650 / CCUG 15529 / CIP 8149 / NCTC 11857 / SLCC 5334 / V8)).